The following is a 148-amino-acid chain: Ribonuclease pancreatic (148 aa).

An N-terminal signal peptide occupies residues 1-25 (MGLEKSLMLFPLLVLVLGLVQPSLG). Residues Lys32 and Arg35 each contribute to the substrate site. His37 functions as the Proton acceptor in the catalytic mechanism. Disulfide bonds link Cys50/Cys108, Cys64/Cys119, Cys82/Cys134, and Cys89/Cys96. Substrate is bound by residues 65–69 (KPVNT), Lys90, and Arg109. The active-site Proton donor is His143.

The protein belongs to the pancreatic ribonuclease family. As to quaternary structure, monomer. Interacts with and forms tight 1:1 complexes with RNH1. Dimerization of two such complexes may occur. Interaction with RNH1 inhibits this protein. Pancreas.

The protein localises to the secreted. The enzyme catalyses an [RNA] containing cytidine + H2O = an [RNA]-3'-cytidine-3'-phosphate + a 5'-hydroxy-ribonucleotide-3'-[RNA].. The catalysed reaction is an [RNA] containing uridine + H2O = an [RNA]-3'-uridine-3'-phosphate + a 5'-hydroxy-ribonucleotide-3'-[RNA].. Endonuclease that catalyzes the cleavage of RNA on the 3' side of pyrimidine nucleotides. Acts on single-stranded and double-stranded RNA. This is Ribonuclease pancreatic (RNASE1) from Gerbilliscus gambianus (Gambian gerbil).